The sequence spans 67 residues: Spiniferin (67 aa).

The first 23 residues, 1 to 23 (MKTQLAILLITLVLFQMFSQSDA), serve as a signal peptide directing secretion. Residue leucine 36 is modified to Leucine amide. Positions 40 to 67 (GLNDLSDLDELFDGEISKADLDFLREIM) are excised as a propeptide.

The protein belongs to the non-disulfide-bridged peptide (NDBP) superfamily. Short antimicrobial peptide (group 4) family. Expressed by the venom gland.

Its subcellular location is the secreted. The protein resides in the target cell membrane. Functionally, alpha-helical and amphipathic peptide with weak antimicrobial activities against both Gram-positive (MIC=41 uM to &gt;82 uM) and Gram-negative (MIC&gt;82 uM) bacteria. It has extremely weak hemolytic activity against human erythrocytes. This is Spiniferin from Heterometrus spinifer (Asia giant forest scorpion).